A 120-amino-acid polypeptide reads, in one-letter code: MSRAKVTNARRKQRVRLSLRRSAGGRPRLSVFRSSKHIYAQVIDDQKGETIASASSMEKEMRSAGNTGADIDAAKAVGKLLAERAVKAGIKEVVFDRGGYLYHGRVKALADAARESGLSF.

It belongs to the universal ribosomal protein uL18 family. As to quaternary structure, part of the 50S ribosomal subunit; part of the 5S rRNA/L5/L18/L25 subcomplex. Contacts the 5S and 23S rRNAs.

In terms of biological role, this is one of the proteins that bind and probably mediate the attachment of the 5S RNA into the large ribosomal subunit, where it forms part of the central protuberance. The protein is Large ribosomal subunit protein uL18 of Bradyrhizobium sp. (strain ORS 278).